The chain runs to 652 residues: Thioredoxin reductase 3 (652 aa).

The span at 1 to 12 (MEKPPSPPPPPR) shows a compositional bias: pro residues. The disordered stretch occupies residues 1–62 (MEKPPSPPPP…TSRPSSEARE (62 aa)). Arginine 34 is modified (asymmetric dimethylarginine; alternate). The residue at position 34 (arginine 34) is an Omega-N-methylarginine; alternate. The residue at position 50 (serine 50) is a Phosphoserine. Residues 65-165 (RRRLRDLIEG…KLLQDDSAHD (101 aa)) form the Glutaredoxin domain. Residue 167–196 (DLIIIGGGSGGLSCAKEAANLGKKVMVLDF) coordinates FAD. A disulfide bond links cysteine 212 and cysteine 217. Lysine 388 bears the N6-succinyllysine mark. Histidine 625 functions as the Proton acceptor in the catalytic mechanism. A cross-link (cysteinyl-selenocysteine (Cys-Sec)) is located at residues 650-651 (CU). Position 651 (selenocysteine 651) is a non-standard amino acid, selenocysteine.

Belongs to the class-I pyridine nucleotide-disulfide oxidoreductase family. Homodimer. FAD is required as a cofactor. As to expression, expressed preferentially in testis where it is found in spermatids and spermatocytes but not in sperm. In elongating spermatids, expressed at the site of mitochondrial sheath formation. Low levels in other tissues including heart, lung, liver, kidney, brain, muscle and prostate.

The protein resides in the cytoplasm. The protein localises to the nucleus. It localises to the microsome. Its subcellular location is the endoplasmic reticulum. It carries out the reaction [thioredoxin]-dithiol + NADP(+) = [thioredoxin]-disulfide + NADPH + H(+). In terms of biological role, displays thioredoxin reductase, glutaredoxin and glutathione reductase activities. Catalyzes disulfide bond isomerization. Promotes disulfide bond formation between GPX4 and various sperm proteins and may play a role in sperm maturation by promoting formation of sperm structural components. The sequence is that of Thioredoxin reductase 3 from Mus musculus (Mouse).